A 373-amino-acid chain; its full sequence is MGDWMIENKVRDVVKKLKPYVPGKSKEEIARAYGIKPEDIIKLGSNENPWGPSPKIKEKILDEIDKIHQYPEPVNPILMKELSKFLNVDEENIIVGGDGADEIIDTIFRTFVDDGDEVIIPIPTFTQYRVSATIHNAKIKYAKYDKEKDFKLNVESVLNNITDKTKVIFLCTPNNPTGNIIENRDVERVINETDALVVIDHAYIEYAKKEYDWTQKAPEYDNVIVLRTFSKVFGLAGMRVGYGVANKKIIDYMMRVKPIFSLTRLSQVCAITALRDREFFERCVRDGIKSREMLYNGLKKFKDIKVYPSEANYLLVELKTMKAKEFCEELLKRGVIVRDCTSFDGLGDNYVRVSIGTFEEVERFLKILEEIIS.

Lys-231 is subject to N6-(pyridoxal phosphate)lysine.

The protein belongs to the class-II pyridoxal-phosphate-dependent aminotransferase family. Histidinol-phosphate aminotransferase subfamily. Pyridoxal 5'-phosphate serves as cofactor.

The enzyme catalyses L-histidinol phosphate + 2-oxoglutarate = 3-(imidazol-4-yl)-2-oxopropyl phosphate + L-glutamate. Its pathway is amino-acid biosynthesis; L-histidine biosynthesis; L-histidine from 5-phospho-alpha-D-ribose 1-diphosphate: step 7/9. This Methanocaldococcus jannaschii (strain ATCC 43067 / DSM 2661 / JAL-1 / JCM 10045 / NBRC 100440) (Methanococcus jannaschii) protein is Histidinol-phosphate aminotransferase (hisC).